The primary structure comprises 395 residues: MSWKYDVVVVGAGIAGPIVARNVARAGFSVLLIDKKWAIGTPKQCAEGISIKVFEKYDIPYDKRFINREIYGAKLYSPSGYELEMRYKDVSGVILERKVFDKMLAYYAAKAGADVLARTEALDVIRKDGKVVGIKAKHEDEPIEIYADVIVAADGVESTIARKAGINTYAPPHEFDSSYEYEMLIEGFDPDLIHLWFGNEIAPRGYVWVFPKDEDRANVGIGINSDNPQTAKYYLDKWLKENNIPAKKLLEINVGVVPVGGFVKELVKNNVLVVGDAARQVNPMHGGGMAEAMEAGTIASKWIVKALEEENLSLLQNYTKEWWETDGKRLEKVLKVRRVTEKLTDEDLDLFIQVLSGADAEKIAGGDYGEVIKALLKHPKVLMSKRRLSLLKSLL.

Residues Ala-15, Asp-34, Cys-45, Ala-46, Gly-48, Arg-97, Ala-121, Asp-276, and Gly-288 each contribute to the FAD site. Arg-329 and Gly-365 together coordinate a 2,3-bis-O-(geranylgeranyl)-sn-glycerol 1-phospholipid.

Belongs to the geranylgeranyl reductase family. DGGGPL reductase subfamily. FAD is required as a cofactor.

It carries out the reaction a 2,3-bis-O-phytanyl-sn-glycerol 1-phospholipid + 8 A = a 2,3-bis-O-(geranylgeranyl)-sn-glycerol 1-phospholipid + 8 AH2. The catalysed reaction is 2,3-bis-O-(phytanyl)-sn-glycerol 1-phosphate + 8 A = 2,3-bis-O-(geranylgeranyl)-sn-glycerol 1-phosphate + 8 AH2. It catalyses the reaction CDP-2,3-bis-O-(geranylgeranyl)-sn-glycerol + 8 AH2 = CDP-2,3-bis-O-(phytanyl)-sn-glycerol + 8 A. The enzyme catalyses archaetidylserine + 8 AH2 = 2,3-bis-O-phytanyl-sn-glycero-3-phospho-L-serine + 8 A. It functions in the pathway membrane lipid metabolism; glycerophospholipid metabolism. Its function is as follows. Is involved in the reduction of 2,3-digeranylgeranylglycerophospholipids (unsaturated archaeols) into 2,3-diphytanylglycerophospholipids (saturated archaeols) in the biosynthesis of archaeal membrane lipids. Catalyzes the formation of archaetidic acid (2,3-di-O-phytanyl-sn-glyceryl phosphate) from 2,3-di-O-geranylgeranylglyceryl phosphate (DGGGP) via the hydrogenation of each double bond of the isoprenoid chains. Is also probably able to reduce double bonds of geranyl groups in CDP-2,3-bis-O-(geranylgeranyl)-sn-glycerol and archaetidylserine, thus acting at various stages in the biosynthesis of archaeal membrane lipids. This Thermococcus gammatolerans (strain DSM 15229 / JCM 11827 / EJ3) protein is Digeranylgeranylglycerophospholipid reductase.